Reading from the N-terminus, the 601-residue chain is Alpha-terpineol synthase, chloroplastic (601 aa).

The N-terminal 47 residues, 1–47, are a transit peptide targeting the chloroplast; that stretch reads MSTISIHHVGILRNPLHSKSKRASINKPWSLSLPRSSSASRLVEPCR. Mn(2+) contacts are provided by Asp-357 and Asp-361. The short motif at 357–361 is the DDXXD motif element; that stretch reads DDVYD. 2 homodimerization regions span residues 363–369 and 435–471; these read YGTLDEL and EAEW…ELSL. Positions 499 and 507 each coordinate Mn(2+).

Belongs to the terpene synthase family. As to quaternary structure, homodimer. Requires Mn(2+) as cofactor. It depends on Mg(2+) as a cofactor.

It is found in the plastid. Its subcellular location is the chloroplast. It catalyses the reaction (2E)-geranyl diphosphate + H2O = (S)-alpha-terpineol + diphosphate. It carries out the reaction (2E)-geranyl diphosphate + H2O = (R)-alpha-terpineol + diphosphate. It functions in the pathway secondary metabolite biosynthesis; terpenoid biosynthesis. Its function is as follows. Involved in the biosynthesis of phenolic monoterpenes natural products. Monoterpene synthase which catalyzes the conversion of geranyl diphosphate (GPP) to alpha-terpineol (isomer is not determined). The sequence is that of Alpha-terpineol synthase, chloroplastic from Thymus caespititius (Cretan thyme).